A 186-amino-acid polypeptide reads, in one-letter code: Elongation factor P (186 aa).

This sequence belongs to the elongation factor P family.

The protein resides in the cytoplasm. The protein operates within protein biosynthesis; polypeptide chain elongation. Its function is as follows. Involved in peptide bond synthesis. Stimulates efficient translation and peptide-bond synthesis on native or reconstituted 70S ribosomes in vitro. Probably functions indirectly by altering the affinity of the ribosome for aminoacyl-tRNA, thus increasing their reactivity as acceptors for peptidyl transferase. This chain is Elongation factor P, found in Prochlorococcus marinus (strain MIT 9301).